The primary structure comprises 442 residues: UDP-N-acetylmuramoylalanine--D-glutamate ligase (442 aa).

113-119 is a binding site for ATP; that stretch reads GSNGKTT.

The protein belongs to the MurCDEF family.

The protein resides in the cytoplasm. The catalysed reaction is UDP-N-acetyl-alpha-D-muramoyl-L-alanine + D-glutamate + ATP = UDP-N-acetyl-alpha-D-muramoyl-L-alanyl-D-glutamate + ADP + phosphate + H(+). Its pathway is cell wall biogenesis; peptidoglycan biosynthesis. Cell wall formation. Catalyzes the addition of glutamate to the nucleotide precursor UDP-N-acetylmuramoyl-L-alanine (UMA). This is UDP-N-acetylmuramoylalanine--D-glutamate ligase from Coxiella burnetii (strain CbuK_Q154) (Coxiella burnetii (strain Q154)).